We begin with the raw amino-acid sequence, 325 residues long: Heat-inducible transcription repressor HrcA (325 aa).

It belongs to the HrcA family.

In terms of biological role, negative regulator of class I heat shock genes (grpE-dnaK-dnaJ and groELS operons). Prevents heat-shock induction of these operons. This is Heat-inducible transcription repressor HrcA from Staphylococcus aureus (strain MRSA252).